The sequence spans 355 residues: tRNA uridine(34) hydroxylase (355 aa).

The 95-residue stretch at 146–240 (DDPDTVFVDM…YARQAKAQGL (95 aa)) folds into the Rhodanese domain. The active-site Cysteine persulfide intermediate is the Cys-200.

Belongs to the TrhO family.

The enzyme catalyses uridine(34) in tRNA + AH2 + O2 = 5-hydroxyuridine(34) in tRNA + A + H2O. Its function is as follows. Catalyzes oxygen-dependent 5-hydroxyuridine (ho5U) modification at position 34 in tRNAs. In Pectobacterium carotovorum subsp. carotovorum (strain PC1), this protein is tRNA uridine(34) hydroxylase.